Consider the following 259-residue polypeptide: Bidirectional sugar transporter SWEET4 (259 aa).

Residues 1 to 10 (MVSPDTIRTA) lie on the Extracellular side of the membrane. The MtN3/slv 1 domain occupies 10–94 (AIGVVGNGTA…TYIALFLAFS (85 aa)). A helical membrane pass occupies residues 11 to 31 (IGVVGNGTALVLFLSPVPTFI). The Cytoplasmic portion of the chain corresponds to 32–44 (RIWKKGSVEQYSA). A helical transmembrane segment spans residues 45–65 (VPYVATLLNCMMWVLYGLPAV). The Extracellular segment spans residues 66–77 (HPHSMLVITING). An N-linked (GlcNAc...) asparagine glycan is attached at asparagine 76. The helical transmembrane segment at 78-98 (TGMAIELTYIALFLAFSLGAV) threads the bilayer. Residues 99–101 (RRR) lie on the Cytoplasmic side of the membrane. A helical membrane pass occupies residues 102–122 (VLLLLAAEVAFVAAVAALVLN). At 123–131 (LAHTHERRS) the chain is on the extracellular side. The helical transmembrane segment at 132-152 (MIVGILCVLFGTGMYAAPLSV) threads the bilayer. The 85-residue stretch at 133–217 (IVGILCVLFG…ILYAIYYKST (85 aa)) folds into the MtN3/slv 2 domain. Topologically, residues 153 to 165 (MKMVIQTKSVEYM) are cytoplasmic. Residues 166–186 (PLFLSLASLVNGICWTAYALI) traverse the membrane as a helical segment. Over 187 to 191 (RFDLY) the chain is Extracellular. The helical transmembrane segment at 192 to 212 (ITIPNGLGVMFAVAQLILYAI) threads the bilayer. At 213-259 (YYKSTQQIIEARKRKEADHVAMTDVVVDSAKNNPSSGAAAAAANGRY) the chain is on the cytoplasmic side.

It belongs to the SWEET sugar transporter family. In terms of assembly, forms homooligomers and/or heterooligomers.

It is found in the cell membrane. Mediates both low-affinity uptake and efflux of sugar across the plasma membrane. The polypeptide is Bidirectional sugar transporter SWEET4 (SWEET4) (Oryza sativa subsp. indica (Rice)).